A 357-amino-acid chain; its full sequence is Holliday junction branch migration complex subunit RuvB (357 aa).

The large ATPase domain (RuvB-L) stretch occupies residues T4–Y195. Residues L34, R35, G76, K79, T80, T81, E142–Y144, R185, Y195, and R232 each bind ATP. T80 contributes to the Mg(2+) binding site. The interval T196–D266 is small ATPAse domain (RuvB-S). A head domain (RuvB-H) region spans residues A269–A357. The DNA site is built by R305, R324, and R329.

Belongs to the RuvB family. Homohexamer. Forms an RuvA(8)-RuvB(12)-Holliday junction (HJ) complex. HJ DNA is sandwiched between 2 RuvA tetramers; dsDNA enters through RuvA and exits via RuvB. An RuvB hexamer assembles on each DNA strand where it exits the tetramer. Each RuvB hexamer is contacted by two RuvA subunits (via domain III) on 2 adjacent RuvB subunits; this complex drives branch migration. In the full resolvosome a probable DNA-RuvA(4)-RuvB(12)-RuvC(2) complex forms which resolves the HJ.

It is found in the cytoplasm. It catalyses the reaction ATP + H2O = ADP + phosphate + H(+). Functionally, the RuvA-RuvB-RuvC complex processes Holliday junction (HJ) DNA during genetic recombination and DNA repair, while the RuvA-RuvB complex plays an important role in the rescue of blocked DNA replication forks via replication fork reversal (RFR). RuvA specifically binds to HJ cruciform DNA, conferring on it an open structure. The RuvB hexamer acts as an ATP-dependent pump, pulling dsDNA into and through the RuvAB complex. RuvB forms 2 homohexamers on either side of HJ DNA bound by 1 or 2 RuvA tetramers; 4 subunits per hexamer contact DNA at a time. Coordinated motions by a converter formed by DNA-disengaged RuvB subunits stimulates ATP hydrolysis and nucleotide exchange. Immobilization of the converter enables RuvB to convert the ATP-contained energy into a lever motion, pulling 2 nucleotides of DNA out of the RuvA tetramer per ATP hydrolyzed, thus driving DNA branch migration. The RuvB motors rotate together with the DNA substrate, which together with the progressing nucleotide cycle form the mechanistic basis for DNA recombination by continuous HJ branch migration. Branch migration allows RuvC to scan DNA until it finds its consensus sequence, where it cleaves and resolves cruciform DNA. In Ralstonia nicotianae (strain ATCC BAA-1114 / GMI1000) (Ralstonia solanacearum), this protein is Holliday junction branch migration complex subunit RuvB.